A 441-amino-acid chain; its full sequence is Ribosomal protein uS12 methylthiotransferase RimO (441 aa).

An MTTase N-terminal domain is found at 8–118 (PKIGFVSLGC…VLQHVHHYVP (111 aa)). [4Fe-4S] cluster contacts are provided by Cys-17, Cys-53, Cys-82, Cys-150, Cys-154, and Cys-157. Residues 136 to 373 (LTPRHYAYLK…MQLQQQISAE (238 aa)) enclose the Radical SAM core domain. Residues 376 to 441 (QEKVGREILV…DEYDLWGSRV (66 aa)) enclose the TRAM domain.

Belongs to the methylthiotransferase family. RimO subfamily. [4Fe-4S] cluster serves as cofactor.

Its subcellular location is the cytoplasm. It carries out the reaction L-aspartate(89)-[ribosomal protein uS12]-hydrogen + (sulfur carrier)-SH + AH2 + 2 S-adenosyl-L-methionine = 3-methylsulfanyl-L-aspartate(89)-[ribosomal protein uS12]-hydrogen + (sulfur carrier)-H + 5'-deoxyadenosine + L-methionine + A + S-adenosyl-L-homocysteine + 2 H(+). In terms of biological role, catalyzes the methylthiolation of an aspartic acid residue of ribosomal protein uS12. This is Ribosomal protein uS12 methylthiotransferase RimO from Salmonella typhi.